A 132-amino-acid chain; its full sequence is Small ribosomal subunit protein uS8 (132 aa).

The protein belongs to the universal ribosomal protein uS8 family. In terms of assembly, part of the 30S ribosomal subunit. Contacts proteins S5 and S12.

In terms of biological role, one of the primary rRNA binding proteins, it binds directly to 16S rRNA central domain where it helps coordinate assembly of the platform of the 30S subunit. This is Small ribosomal subunit protein uS8 from Xanthobacter autotrophicus (strain ATCC BAA-1158 / Py2).